Reading from the N-terminus, the 130-residue chain is Holo-[acyl-carrier-protein] synthase (130 aa).

Residues aspartate 9 and glutamate 58 each coordinate Mg(2+).

This sequence belongs to the P-Pant transferase superfamily. AcpS family. Mg(2+) is required as a cofactor.

The protein resides in the cytoplasm. It catalyses the reaction apo-[ACP] + CoA = holo-[ACP] + adenosine 3',5'-bisphosphate + H(+). Transfers the 4'-phosphopantetheine moiety from coenzyme A to a Ser of acyl-carrier-protein. The protein is Holo-[acyl-carrier-protein] synthase of Mycolicibacterium paratuberculosis (strain ATCC BAA-968 / K-10) (Mycobacterium paratuberculosis).